Reading from the N-terminus, the 745-residue chain is Junction plakoglobin (745 aa).

Met-1 carries the N-acetylmethionine modification. O-linked (GlcNAc) threonine glycosylation occurs at Thr-14. Phosphoserine is present on residues Ser-99 and Ser-125. 12 ARM repeats span residues 132 to 171 (NYQD…QLSK), 172 to 215 (KEAS…LSHH), 216 to 255 (REGL…NLLL), 258 to 297 (EGAK…LLAY), 298 to 341 (GNQE…LSVC), 342 to 381 (PSNK…NLSD), 383 to 420 (ATKQ…NLTC), 423 to 464 (SKNK…HLTS), 470 to 510 (EMAQ…NLAL), 512 to 551 (PANH…QPYT), 574 to 613 (PMNR…ELAQ), and 615 to 661 (KEAA…PDYR). An interaction with DSC1 and DSG1 region spans residues 132–297 (NYQDDAELAT…TTDCLQLLAY (166 aa)). The residue at position 182 (Ser-182) is a Phosphoserine. The segment at 574–661 (PMNRMEIFRL…ISEDKNPDYR (88 aa)) is interaction with DSC1. Phosphoserine occurs at positions 665 and 730.

The protein belongs to the beta-catenin family. As to quaternary structure, homodimer. Component of an E-cadherin/catenin adhesion complex composed of at least E-cadherin/CDH1 and gamma-catenin/JUP, and possibly alpha-catenin/CTNNA1; the complex is located to adherens junctions. The stable association of CTNNA1 is controversial as CTNNA1 was shown not to bind to F-actin when assembled in the complex. Interacts with MUC1. Interacts with CAV1. Interacts with PTPRJ. Interacts with DSG1. Interacts with DSC1 and DSC2. Interacts with PKP2. Interacts with PKP3 (via N-terminus); the interaction is required for PKP3 localization to desmosome cell-cell junctions. Interacts with DSG4. In terms of processing, may be phosphorylated by FER. In terms of tissue distribution, expressed in the heart (at protein level).

Its subcellular location is the cell junction. The protein resides in the adherens junction. It is found in the desmosome. The protein localises to the cytoplasm. It localises to the cytoskeleton. Its subcellular location is the cell membrane. The protein resides in the nucleus. Functionally, common junctional plaque protein. The membrane-associated plaques are architectural elements in an important strategic position to influence the arrangement and function of both the cytoskeleton and the cells within the tissue. The presence of plakoglobin in both the desmosomes and in the intermediate junctions suggests that it plays a central role in the structure and function of submembranous plaques. Acts as a substrate for VE-PTP and is required by it to stimulate VE-cadherin function in endothelial cells. Can replace beta-catenin in E-cadherin/catenin adhesion complexes which are proposed to couple cadherins to the actin cytoskeleton. In Rattus norvegicus (Rat), this protein is Junction plakoglobin.